The primary structure comprises 455 residues: GTPase Der (455 aa).

EngA-type G domains are found at residues 4-169 (PVVA…PPKD) and 178-353 (IQMS…EQHR). GTP-binding positions include 10 to 17 (GRPNVGKS), 57 to 61 (DTGGL), 120 to 123 (NKCE), 184 to 191 (GRPNVGKS), 231 to 235 (DTAGI), and 296 to 299 (NKWD). The region spanning 354–439 (RRVTTSVVNE…PLKLFWRGKQ (86 aa)) is the KH-like domain.

This sequence belongs to the TRAFAC class TrmE-Era-EngA-EngB-Septin-like GTPase superfamily. EngA (Der) GTPase family. As to quaternary structure, associates with the 50S ribosomal subunit.

In terms of biological role, GTPase that plays an essential role in the late steps of ribosome biogenesis. The sequence is that of GTPase Der from Synechococcus sp. (strain CC9902).